Here is a 415-residue protein sequence, read N- to C-terminus: MESWSAPEVPALPGRGPQLRLYDSADRQVRPVSAGDTATMYVCGITPYDATHLGHAATYLAFDLVHRLWLDAGHRVHYVQNITDVDDPLFERAARDGIDWRDLGAREIQLFREDMAALRVLPPHDYVAATDAIAEVIELVEKMLASGAAYVVDDPEFPDVYYRADATVQFGYESNYDHETMLTLFAERGGDPDRAGKADELDALLWRAERPGEPSWPSPFGPGRPGWHVECAAIALSRIGTGLDIQGGGSDLIFPHHEFSAAHAESVTGERRFARHYVHAGMIGWDGHKMSKSRGNLVLVSRLRAEGVDPSAIRLGLLAGHYREDRFWSDDVLSDAQTRLQRWRRATSLPTGPDATDVLARVRTYLADDLDTPKALIALDAWCTEALDGGGSDVTAPKTVATAVDALLGVALPVE.

Zn(2+) is bound at residue C43. Residues 43-46 (CGIT), T58, and 81-83 (NIT) contribute to the L-cysteinyl-5'-AMP site. A 'HIGH' region motif is present at residues 45–55 (ITPYDATHLGH). Positions 187–192 (ERGGDP) match the 'ERGGDP' region motif. W227 provides a ligand contact to L-cysteinyl-5'-AMP. A Zn(2+)-binding site is contributed by C231. Position 249–251 (249–251 (GSD)) interacts with L-cysteinyl-5'-AMP. H256 serves as a coordination point for Zn(2+). Residue I283 participates in L-cysteinyl-5'-AMP binding. The short motif at 289-293 (KMSKS) is the 'KMSKS' region element.

This sequence belongs to the class-I aminoacyl-tRNA synthetase family. MshC subfamily. In terms of assembly, monomer. It depends on Zn(2+) as a cofactor.

The enzyme catalyses 1D-myo-inositol 2-amino-2-deoxy-alpha-D-glucopyranoside + L-cysteine + ATP = 1D-myo-inositol 2-(L-cysteinylamino)-2-deoxy-alpha-D-glucopyranoside + AMP + diphosphate + H(+). Functionally, catalyzes the ATP-dependent condensation of GlcN-Ins and L-cysteine to form L-Cys-GlcN-Ins. The polypeptide is L-cysteine:1D-myo-inositol 2-amino-2-deoxy-alpha-D-glucopyranoside ligase (Mycobacterium sp. (strain JLS)).